Consider the following 72-residue polypeptide: Translation initiation factor IF-1 (72 aa).

An S1-like domain is found at 1–72 (MAKEDTIQMQ…TRARIVFRAR (72 aa)).

It belongs to the IF-1 family. As to quaternary structure, component of the 30S ribosomal translation pre-initiation complex which assembles on the 30S ribosome in the order IF-2 and IF-3, IF-1 and N-formylmethionyl-tRNA(fMet); mRNA recruitment can occur at any time during PIC assembly.

The protein localises to the cytoplasm. Its function is as follows. One of the essential components for the initiation of protein synthesis. Stabilizes the binding of IF-2 and IF-3 on the 30S subunit to which N-formylmethionyl-tRNA(fMet) subsequently binds. Helps modulate mRNA selection, yielding the 30S pre-initiation complex (PIC). Upon addition of the 50S ribosomal subunit IF-1, IF-2 and IF-3 are released leaving the mature 70S translation initiation complex. This is Translation initiation factor IF-1 from Neisseria gonorrhoeae (strain ATCC 700825 / FA 1090).